The following is a 201-amino-acid chain: Rho GDP-dissociation inhibitor 2 (201 aa).

The tract at residues 1–38 (MTEKAPEPHVEEDDDDELDSKLNYKPPPQKSLKELQEM) is disordered. Threonine 2 is modified (N-acetylthreonine). Lysine 21 is modified (N6-acetyllysine). Tyrosine 24 carries the post-translational modification Phosphotyrosine. 5 positions are modified to N6-acetyllysine: lysine 25, lysine 40, lysine 47, lysine 102, and lysine 124. At serine 145 the chain carries Phosphoserine. Lysine 175 carries the post-translational modification N6-acetyllysine.

This sequence belongs to the Rho GDI family. Interacts with RHOA. Interacts with RAC1. Interacts with RAC2. Interacts with CDC42. In terms of tissue distribution, detected in bone marrow, thymus and spleen.

Its subcellular location is the cytoplasm. It localises to the cytosol. Functionally, regulates the GDP/GTP exchange reaction of the Rho proteins by inhibiting the dissociation of GDP from them, and the subsequent binding of GTP to them. Regulates reorganization of the actin cytoskeleton mediated by Rho family members. In Homo sapiens (Human), this protein is Rho GDP-dissociation inhibitor 2 (ARHGDIB).